We begin with the raw amino-acid sequence, 209 residues long: Potassium-transporting ATPase KdpC subunit (209 aa).

A helical transmembrane segment spans residues 11 to 31; sequence MILALTVLTGLAYPLAVTAVA. The interval 188–209 is disordered; sequence AQAPTPRQPEPGHPEPGRPEVR. Residues 197–209 are compositionally biased toward basic and acidic residues; that stretch reads EPGHPEPGRPEVR.

This sequence belongs to the KdpC family. In terms of assembly, the system is composed of three essential subunits: KdpA, KdpB and KdpC.

It is found in the cell inner membrane. Its function is as follows. Part of the high-affinity ATP-driven potassium transport (or Kdp) system, which catalyzes the hydrolysis of ATP coupled with the electrogenic transport of potassium into the cytoplasm. This subunit acts as a catalytic chaperone that increases the ATP-binding affinity of the ATP-hydrolyzing subunit KdpB by the formation of a transient KdpB/KdpC/ATP ternary complex. The protein is Potassium-transporting ATPase KdpC subunit of Rhodospirillum centenum (strain ATCC 51521 / SW).